The following is a 375-amino-acid chain: Probable peptidoglycan glycosyltransferase FtsW (375 aa).

Residues 1 to 16 (MNLNFKLNLKEIERYD) lie on the Cytoplasmic side of the membrane. A helical transmembrane segment spans residues 17–37 (LVILLMAVALTCFGVVMVYSA). Residues 38–49 (SSVMATKKFHDG) are Periplasmic-facing. Residues 50–70 (FYFLKRQGIYAILGCAAMIVA) form a helical membrane-spanning segment. Topologically, residues 71–81 (MRIDYRQWREY) are cytoplasmic. The chain crosses the membrane as a helical span at residues 82-102 (AVPILLGCLLLLLLVFIPGIG). At 103–145 (GAAKGASRWIRFPGFNLQPSELAKIALIMYMAYSLDKKQEKVK) the chain is on the periplasmic side. The helical transmembrane segment at 146–166 (FFSTGFAPYMVLLAILLAILL) threads the bilayer. Topologically, residues 167–169 (KQH) are cytoplasmic. Residues 170-190 (DLGSALTMGGVAILMLFAAGT) form a helical membrane-spanning segment. Over 191–193 (RPR) the chain is Periplasmic. A helical transmembrane segment spans residues 194–214 (YILGMVVLTLPFLYFLVMNVD). At 215–233 (YRRRRILAYLNPWEDPTNT) the chain is on the cytoplasmic side. The chain crosses the membrane as a helical span at residues 234-254 (GFQIIQSWLAFGNGGIIGQGL). Over 255-279 (GEGKQKMFFLPEAHTDFILSVVGEE) the chain is Periplasmic. The helical transmembrane segment at 280-300 (LGLIGVIVIAAMFLMLVLRGV) threads the bilayer. Topologically, residues 301-312 (RVALMAQDPFGR) are cytoplasmic. The helical transmembrane segment at 313–333 (FLAFGIVTLLGIQAFVNMGVV) threads the bilayer. Topologically, residues 334-343 (TGLLPTKGLA) are periplasmic. Residues 344–364 (LPFISYGGSSLIVTLFAVGIL) traverse the membrane as a helical segment. Residues 365–375 (LNVSTRMKGTP) are Cytoplasmic-facing.

This sequence belongs to the SEDS family. FtsW subfamily.

It localises to the cell inner membrane. It catalyses the reaction [GlcNAc-(1-&gt;4)-Mur2Ac(oyl-L-Ala-gamma-D-Glu-L-Lys-D-Ala-D-Ala)](n)-di-trans,octa-cis-undecaprenyl diphosphate + beta-D-GlcNAc-(1-&gt;4)-Mur2Ac(oyl-L-Ala-gamma-D-Glu-L-Lys-D-Ala-D-Ala)-di-trans,octa-cis-undecaprenyl diphosphate = [GlcNAc-(1-&gt;4)-Mur2Ac(oyl-L-Ala-gamma-D-Glu-L-Lys-D-Ala-D-Ala)](n+1)-di-trans,octa-cis-undecaprenyl diphosphate + di-trans,octa-cis-undecaprenyl diphosphate + H(+). It functions in the pathway cell wall biogenesis; peptidoglycan biosynthesis. Its function is as follows. Peptidoglycan polymerase that is essential for cell division. The protein is Probable peptidoglycan glycosyltransferase FtsW of Geobacter metallireducens (strain ATCC 53774 / DSM 7210 / GS-15).